We begin with the raw amino-acid sequence, 821 residues long: Nitrogen permease regulator 3 (821 aa).

The first 21 residues, 1-21, serve as a signal peptide directing secretion; that stretch reads MSLNLPNPSILGILLVVSTHS. Disordered stretches follow at residues 29–64, 116–194, 246–283, and 654–694; these read YPPD…ELDI, RQTS…GIPP, GSWK…DYET, and ENEG…PEDI. Residues 116–142 are compositionally biased toward basic and acidic residues; it reads RQTSQERNKIYGHKQSDSHIDPDEIKS. A compositionally biased stretch (low complexity) spans 170–192; it reads KKTISSISDSQKSSTSKASTSGI. The segment covering 249–266 has biased composition (basic residues); sequence KSKHSHRPKSGKSSKGRS. Residues 669–688 show a composition bias toward polar residues; that stretch reads ADPNISNKLNAGTDNTSKTE.

It belongs to the NPR3 family.

In terms of biological role, mediates inactivation of the TORC1 complex in response to amino acid starvation. Required for meiotic nuclear division. The polypeptide is Nitrogen permease regulator 3 (NPR3) (Debaryomyces hansenii (strain ATCC 36239 / CBS 767 / BCRC 21394 / JCM 1990 / NBRC 0083 / IGC 2968) (Yeast)).